We begin with the raw amino-acid sequence, 473 residues long: Pentatricopeptide repeat-containing protein At3g60050 (473 aa).

9 PPR repeats span residues 148–182 (TVNSYHLLMKIFAECGEYKAMWRLVDEMVQDGFPT), 183–217 (TARTFNLLICSCGEAGLAKQAVVQFMKSKTFNYRP), 218–252 (FKHSYNAILNSLLGVKQYKLIEWVYKQMLEDGFSP), 253–287 (DVLTYNILLWTNYRLGKMDRFDRLFDEMARDGFSP), 288–322 (DSYTYNILLHILGKGNKPLAALTTLNHMKEVGIDP), 323–357 (SVLHYTTLIDGLSRAGNLEACKYFLDEMVKAGCRP), 358–392 (DVVCYTVMITGYVVSGELDKAKEMFREMTVKGQLP), 393–427 (NVFTYNSMIRGLCMAGEFREACWLLKEMESRGCNP), and 428–462 (NFVVYSTLVSYLRKAGKLSEARKVIREMVKKGHYV).

It belongs to the PPR family. P subfamily.

This chain is Pentatricopeptide repeat-containing protein At3g60050, found in Arabidopsis thaliana (Mouse-ear cress).